A 536-amino-acid polypeptide reads, in one-letter code: SNW domain-containing protein 1 (536 aa).

Residues 1–46 are disordered; the sequence is MALTSFLPAPTQLSQDQLEAEEKARSQRSRQTSLVSSRREPPPYGY. Position 2 is an N-acetylalanine (Ala2). Phosphoserine is present on Ser14. Residue Lys23 forms a Glycyl lysine isopeptide (Lys-Gly) (interchain with G-Cter in SUMO2) linkage. Residues 59-79 form an interaction with PPIL1 region; sequence GDGGAFPEIHVAQYPLDMGRK. Glycyl lysine isopeptide (Lys-Gly) (interchain with G-Cter in SUMO2) cross-links involve residues Lys81, Lys97, Lys115, Lys122, Lys141, Lys158, and Lys170. Positions 174 to 339 are SNW; sequence AQYIRYTPSQ…KARERRAGIK (166 aa). A phosphoserine mark is found at Ser182 and Ser190. Lys193 participates in a covalent cross-link: Glycyl lysine isopeptide (Lys-Gly) (interchain with G-Cter in SUMO2). The interval 209 to 233 is disordered; sequence PPRFKINKKIPRGPPSPPAPVMHSP. Ser224, Ser232, and Ser234 each carry phosphoserine. Glycyl lysine isopeptide (Lys-Gly) (interchain with G-Cter in SUMO2) cross-links involve residues Lys240, Lys258, Lys286, Lys339, Lys344, Lys416, and Lys441. A disordered region spans residues 311-386; it reads KMAQKEKEKH…RSKLQRNENR (76 aa). Ser446 is modified (phosphoserine). Lys452 participates in a covalent cross-link: Glycyl lysine isopeptide (Lys-Gly) (interchain with G-Cter in SUMO2). Basic and acidic residues-rich tracts occupy residues 470–489 and 503–530; these read NRFVPDKEFSGSDRRQRGRE and KFLEEAKQHGGSKRPSDSSRPKEHEHEG. Residues 470–536 form a disordered region; it reads NRFVPDKEFS…EHEGKKRRKE (67 aa). Phosphoserine occurs at positions 479 and 481. Lys509 is covalently cross-linked (Glycyl lysine isopeptide (Lys-Gly) (interchain with G-Cter in SUMO2)).

Belongs to the SNW family. Identified in the spliceosome C complex. Associates with U4/U6-U5 tri-small nuclear ribonucleoproteins (U4/U6-U5 tri-snRNPs). Component of the minor spliceosome, which splices U12-type introns. Interacts with SKI, SMAD2,SMAD3, RBPJ, RB1, PABPN1, MAGEA1, SIRT1, FOXN3, U2AF2, DAXX and ATP1B4. Interacts with PPIL1. Interacts with VDR and RXRA; preferentially associates with VDR:RXRA heterodimers. Interacts with NCOR2. Interacts with MAML1. Interacts with NOTCH1 NICD; the interaction involves multimerized NOTCH1 NICD. Forms a complex with NOTCH1 NICD and MAML1; the association is dissociated by RBPJ. Associates with positive transcription elongation factor b (P-TEFb). Component of the SNARP complex which consists at least of SNIP1, SNW1, THRAP3, BCLAF1 and PNN. In terms of assembly, (Microbial infection) Interacts with human papillomavirus type-16 (HPV16) E7 protein. As to quaternary structure, (Microbial infection) Interacts with EBV EBNA2; EBNA2 competes with NCOR2 for interaction with SNW1.

The protein resides in the nucleus. Its function is as follows. Involved in pre-mRNA splicing as component of the spliceosome. As a component of the minor spliceosome, involved in the splicing of U12-type introns in pre-mRNAs. Required for the specific splicing of CDKN1A pre-mRNA; the function probably involves the recruitment of U2AF2 to the mRNA. May recruit PPIL1 to the spliceosome. May be involved in cyclin-D1/CCND1 mRNA stability through the SNARP complex which associates with both the 3'end of the CCND1 gene and its mRNA. Involved in transcriptional regulation. Modulates TGF-beta-mediated transcription via association with SMAD proteins, MYOD1-mediated transcription via association with PABPN1, RB1-mediated transcriptional repression, and retinoid-X receptor (RXR)- and vitamin D receptor (VDR)-dependent gene transcription in a cell line-specific manner probably involving coactivators NCOA1 and GRIP1. Is involved in NOTCH1-mediated transcriptional activation. Binds to multimerized forms of Notch intracellular domain (NICD) and is proposed to recruit transcriptional coactivators such as MAML1 to form an intermediate preactivation complex which associates with DNA-bound CBF-1/RBPJ to form a transcriptional activation complex by releasing SNW1 and redundant NOTCH1 NICD. Functionally, (Microbial infection) Is recruited by HIV-1 Tat to Tat:P-TEFb:TAR RNA complexes and is involved in Tat transcription by recruitment of MYC, MEN1 and TRRAP to the HIV promoter. In terms of biological role, (Microbial infection) Proposed to be involved in transcriptional activation by EBV EBNA2 of CBF-1/RBPJ-repressed promoters. The chain is SNW domain-containing protein 1 (SNW1) from Homo sapiens (Human).